The following is a 227-amino-acid chain: tRNA (guanine-N(1)-)-methyltransferase (227 aa).

S-adenosyl-L-methionine is bound by residues G107 and 127–132 (LGDFIL).

Belongs to the RNA methyltransferase TrmD family. Homodimer.

Its subcellular location is the cytoplasm. The enzyme catalyses guanosine(37) in tRNA + S-adenosyl-L-methionine = N(1)-methylguanosine(37) in tRNA + S-adenosyl-L-homocysteine + H(+). Specifically methylates guanosine-37 in various tRNAs. This chain is tRNA (guanine-N(1)-)-methyltransferase, found in Mesomycoplasma hyopneumoniae (strain 7448) (Mycoplasma hyopneumoniae).